The chain runs to 170 residues: MYTSKQPFLKSKQPFSKSEQPFSKSEQPFRKSKQTFRKFKQPFRKSKQPFRRRPRIGPGDRIDYRNMSLINRFISEQGKILSRRINRLTLKQQRLITLAIKQARILSFLPFRNYENEKQFQAQSISIITGSRPRKNRHIPQLTQKYNSNRNLRNNNQNLRNNNRNLSSDC.

2 disordered regions span residues methionine 1–aspartate 60 and asparagine 149–cysteine 170. 7 repeats span residues serine 4–lysine 10, serine 11–lysine 17, serine 18–lysine 24, serine 25–lysine 31, serine 32–lysine 38, phenylalanine 39–lysine 45, and serine 46–arginine 52. A 7 X 7 AA tandem repeats region spans residues serine 4–arginine 52. The span at glutamine 13–glutamate 26 shows a compositional bias: polar residues. The segment covering arginine 30 to arginine 55 has biased composition (basic residues).

This sequence belongs to the bacterial ribosomal protein bS18 family. As to quaternary structure, part of the 30S ribosomal subunit.

It localises to the plastid. It is found in the chloroplast. The polypeptide is Small ribosomal subunit protein bS18c (rps18) (Secale cereale (Rye)).